A 775-amino-acid chain; its full sequence is Mitosis inducer protein kinase cdr2 (775 aa).

In terms of domain architecture, Protein kinase spans 10 to 262 (WELGLSLGSG…MEQIREHPFL (253 aa)). ATP-binding positions include 16–24 (LGSGGPNSS) and Lys39. Asp133 functions as the Proton acceptor in the catalytic mechanism. Ser309, Ser311, and Ser476 each carry phosphoserine. Over residues 549–563 (NNIDNNNYNQPYANA) the composition is skewed to low complexity. The disordered stretch occupies residues 549 to 620 (NNIDNNNYNQ…TKKKLSGSPF (72 aa)). The segment covering 584–593 (LSQSPASYDS) has biased composition (polar residues). A phosphoserine mark is found at Ser587 and Ser632.

It belongs to the protein kinase superfamily. CAMK Ser/Thr protein kinase family. NIM1 subfamily. In terms of assembly, interacts with blt1 and mid1. In terms of processing, autophosphorylated.

It catalyses the reaction L-seryl-[protein] + ATP = O-phospho-L-seryl-[protein] + ADP + H(+). The enzyme catalyses L-threonyl-[protein] + ATP = O-phospho-L-threonyl-[protein] + ADP + H(+). Acts as a mitotic inducer. In G2 it negatively regulates wee1, a mitotic inhibitor. Also has a role in cytokinesis where it required for proper septum formation. This chain is Mitosis inducer protein kinase cdr2 (cdr2), found in Schizosaccharomyces pombe (strain 972 / ATCC 24843) (Fission yeast).